The primary structure comprises 489 residues: Betaine aldehyde dehydrogenase (489 aa).

2 residues coordinate K(+): Thr-26 and Asp-93. 150-152 provides a ligand contact to NAD(+); it reads GAW. Lys-162 serves as the catalytic Charge relay system. 176 to 179 contacts NAD(+); that stretch reads KPSE. Val-180 is a binding site for K(+). 229–232 is an NAD(+) binding site; sequence GVET. Leu-245 serves as a coordination point for K(+). The Proton acceptor role is filled by Glu-251. NAD(+)-binding residues include Gly-253, Cys-285, and Glu-386. Cys-285 (nucleophile) is an active-site residue. Cys-285 is subject to Cysteine sulfenic acid (-SOH). K(+)-binding residues include Lys-456 and Gly-459. Glu-463 serves as the catalytic Charge relay system.

This sequence belongs to the aldehyde dehydrogenase family. Dimer of dimers. It depends on K(+) as a cofactor.

The enzyme catalyses betaine aldehyde + NAD(+) + H2O = glycine betaine + NADH + 2 H(+). The protein operates within amine and polyamine biosynthesis; betaine biosynthesis via choline pathway; betaine from betaine aldehyde: step 1/1. Functionally, involved in the biosynthesis of the osmoprotectant glycine betaine. Catalyzes the irreversible oxidation of betaine aldehyde to the corresponding acid. The sequence is that of Betaine aldehyde dehydrogenase from Burkholderia lata (strain ATCC 17760 / DSM 23089 / LMG 22485 / NCIMB 9086 / R18194 / 383).